A 230-amino-acid polypeptide reads, in one-letter code: Osmotin-like protein PR-5x (230 aa).

A signal peptide spans 1-25; that stretch reads MYTNMGYLTSSFIFFFLALVTYTYA. 8 disulfide bridges follow: Cys-34–Cys-229, Cys-76–Cys-86, Cys-91–Cys-97, Cys-145–Cys-217, Cys-150–Cys-200, Cys-158–Cys-168, Cys-172–Cys-181, and Cys-182–Cys-187.

The protein belongs to the thaumatin family.

The protein resides in the secreted. Its subcellular location is the vacuole. It carries out the reaction Endohydrolysis of (1-&gt;3)- or (1-&gt;4)-linkages in beta-D-glucans when the glucose residue whose reducing group is involved in the linkage to be hydrolyzed is itself substituted at C-3.. Functionally, antifungal protein. May bind to beta-glucans and have beta-1,3-D-glucanase activity. The sequence is that of Osmotin-like protein PR-5x from Solanum lycopersicum (Tomato).